Reading from the N-terminus, the 535-residue chain is Dimethylaniline monooxygenase [N-oxide-forming] 2 (535 aa).

N-acetylalanine is present on alanine 2. FAD is bound by residues 9-13, glutamate 32, 40-41, and 61-62; these read GAGVS, LW, and NT. Residues 60 to 61 and 195 to 198 each bind NADP(+); these read TN and SASD. Residue lysine 492 forms a Glycyl lysine isopeptide (Lys-Gly) (interchain with G-Cter in SUMO) linkage. Residues 510 to 530 traverse the membrane as a helical segment; it reads LSASFLMKILALVAVFVAFFS.

It belongs to the FMO family. FAD is required as a cofactor. It depends on Mg(2+) as a cofactor. As to expression, lung.

The protein resides in the microsome membrane. Its subcellular location is the endoplasmic reticulum membrane. Functionally, catalyzes the oxidative metabolism of numerous xenobiotics, including mainly therapeutic drugs and insecticides that contain a soft nucleophile, most commonly nitrogen and sulfur and participates to their bioactivation. This chain is Dimethylaniline monooxygenase [N-oxide-forming] 2, found in Cavia porcellus (Guinea pig).